A 99-amino-acid chain; its full sequence is NADH-quinone oxidoreductase subunit K (99 aa).

Transmembrane regions (helical) follow at residues 3 to 23 (LVNYLVLSGLLFTIGAATVLV), 28 to 48 (IIMFMGVELMLNASNLAFVAF), and 59 to 79 (VVAFFVMVVAAAEVVVGLAII).

It belongs to the complex I subunit 4L family. As to quaternary structure, NDH-1 is composed of 14 different subunits. Subunits NuoA, H, J, K, L, M, N constitute the membrane sector of the complex.

It is found in the cell membrane. It carries out the reaction a quinone + NADH + 5 H(+)(in) = a quinol + NAD(+) + 4 H(+)(out). Its function is as follows. NDH-1 shuttles electrons from NADH, via FMN and iron-sulfur (Fe-S) centers, to quinones in the respiratory chain. The immediate electron acceptor for the enzyme in this species is believed to be a menaquinone. Couples the redox reaction to proton translocation (for every two electrons transferred, four hydrogen ions are translocated across the cytoplasmic membrane), and thus conserves the redox energy in a proton gradient. This is NADH-quinone oxidoreductase subunit K from Beutenbergia cavernae (strain ATCC BAA-8 / DSM 12333 / CCUG 43141 / JCM 11478 / NBRC 16432 / NCIMB 13614 / HKI 0122).